A 202-amino-acid chain; its full sequence is Methylthioribulose-1-phosphate dehydratase (202 aa).

Residues His93 and His95 each contribute to the Zn(2+) site.

It belongs to the aldolase class II family. MtnB subfamily. Requires Zn(2+) as cofactor.

It catalyses the reaction 5-(methylsulfanyl)-D-ribulose 1-phosphate = 5-methylsulfanyl-2,3-dioxopentyl phosphate + H2O. Its pathway is amino-acid biosynthesis; L-methionine biosynthesis via salvage pathway; L-methionine from S-methyl-5-thio-alpha-D-ribose 1-phosphate: step 2/6. Catalyzes the dehydration of methylthioribulose-1-phosphate (MTRu-1-P) into 2,3-diketo-5-methylthiopentyl-1-phosphate (DK-MTP-1-P). In Klebsiella pneumoniae (strain 342), this protein is Methylthioribulose-1-phosphate dehydratase.